A 223-amino-acid polypeptide reads, in one-letter code: Transmembrane protein 235 (223 aa).

An N-terminal signal peptide occupies residues 1–28 (MARLGALLLAAALGALLSFALLAAAVAS). A glycan (N-linked (GlcNAc...) asparagine) is linked at Asn41. 3 consecutive transmembrane segments (helical) span residues 96 to 116 (VIVV…CGLL), 126 to 146 (LLFT…GVSI), and 176 to 196 (WSMA…TLLL).

Belongs to the PMP-22/EMP/MP20 family. N-glycosylated.

It is found in the membrane. The protein resides in the endoplasmic reticulum. The protein is Transmembrane protein 235 (TMEM235) of Homo sapiens (Human).